Here is a 428-residue protein sequence, read N- to C-terminus: Trigger factor (428 aa).

Residues 163–248 enclose the PPIase FKBP-type domain; that stretch reads KDIVTIDFEG…VKEIKAKELP (86 aa).

The protein belongs to the FKBP-type PPIase family. Tig subfamily.

It is found in the cytoplasm. It carries out the reaction [protein]-peptidylproline (omega=180) = [protein]-peptidylproline (omega=0). In terms of biological role, involved in protein export. Acts as a chaperone by maintaining the newly synthesized protein in an open conformation. Functions as a peptidyl-prolyl cis-trans isomerase. The polypeptide is Trigger factor (Lachnoclostridium phytofermentans (strain ATCC 700394 / DSM 18823 / ISDg) (Clostridium phytofermentans)).